We begin with the raw amino-acid sequence, 509 residues long: Histidine ammonia-lyase (509 aa).

Residues 142-144 constitute a cross-link (5-imidazolinone (Ala-Gly)); the sequence is ASG. Ser143 is modified (2,3-didehydroalanine (Ser)).

It belongs to the PAL/histidase family. Contains an active site 4-methylidene-imidazol-5-one (MIO), which is formed autocatalytically by cyclization and dehydration of residues Ala-Ser-Gly.

Its subcellular location is the cytoplasm. It catalyses the reaction L-histidine = trans-urocanate + NH4(+). It functions in the pathway amino-acid degradation; L-histidine degradation into L-glutamate; N-formimidoyl-L-glutamate from L-histidine: step 1/3. The protein is Histidine ammonia-lyase of Pseudomonas aeruginosa (strain UCBPP-PA14).